The chain runs to 327 residues: Methionyl-tRNA formyltransferase (327 aa).

118-121 (SLLP) serves as a coordination point for (6S)-5,6,7,8-tetrahydrofolate.

This sequence belongs to the Fmt family.

The catalysed reaction is L-methionyl-tRNA(fMet) + (6R)-10-formyltetrahydrofolate = N-formyl-L-methionyl-tRNA(fMet) + (6S)-5,6,7,8-tetrahydrofolate + H(+). Attaches a formyl group to the free amino group of methionyl-tRNA(fMet). The formyl group appears to play a dual role in the initiator identity of N-formylmethionyl-tRNA by promoting its recognition by IF2 and preventing the misappropriation of this tRNA by the elongation apparatus. In Corynebacterium jeikeium (strain K411), this protein is Methionyl-tRNA formyltransferase.